Reading from the N-terminus, the 353-residue chain is MRVLILSAFIACATAAPSAPVFGTLTPLTVPYIANIPTISPGDIQAAAIDAKVKVEDALRAAADRNQELLEQAIENQNEKVIEVNDLLKEKSQEAFWSTEDTKWQALTALQTAEAKIDGTLASNADLLGKAVLNGVVVSPVVSRIYSNVIQGVAAADCETPVLKAAEAPEGNKDEGNKDSVQVESSATESESDKAAAGFVRNLEAAQAAAQAQLLSETSAPTADTRAVIAASSEASAAAAPAASLSEASAQSASETGVSAASLSQSPVATPLSAAPLAPLPSSSVPLAGVPASAIAAAPLTAASLIASPLTLPTLNLEQQWVTGPVFVQPGLKAISPISLQTPFVPTLLKTPC.

A signal peptide spans 1 to 15 (MRVLILSAFIACATA). The segment at 166-195 (AEAPEGNKDEGNKDSVQVESSATESESDKA) is disordered. The span at 179-189 (DSVQVESSATE) shows a compositional bias: polar residues.

Its function is as follows. Component of the cuticle of the pupa of Galleria mellonella. This is Pupal cuticle protein PCP52 (PCP52) from Galleria mellonella (Greater wax moth).